We begin with the raw amino-acid sequence, 852 residues long: Kinesin-like protein KIF18B (852 aa).

The Kinesin motor domain occupies 7 to 351; sequence TLQVVVRVRP…LKYADRAKEI (345 aa). An ATP-binding site is contributed by 109–116; that stretch reads GATGAGKT. Residues 366–393 are a coiled coil; it reads ISQYATICQQLQAEVAALRKKLQVYEGG. Disordered regions lie at residues 390 to 424 and 437 to 485; these read YEGG…PAGP and QVER…RLTL. S404 is subject to Phosphoserine. At T417 the chain carries Phosphothreonine. Over residues 451-461 the composition is skewed to acidic residues; sequence QSPEDEDEGPA. Phosphoserine occurs at positions 452, 480, and 558. 2 disordered regions span residues 575–594 and 602–689; these read IPVP…PVTR and GPLH…SPRV. The segment covering 577–588 has biased composition (pro residues); the sequence is VPSPLCPEPPGY. The Nuclear localization signal motif lies at 624–632; sequence PMEKKRRRP. A phosphoserine mark is found at S633 and S639. An MAPRE1-binding motif is present at residues 653–656; the sequence is SFLP. At S662 the chain carries Phosphoserine. Positions 664–673 are enriched in polar residues; sequence PDTQPSQGPS. The residue at position 674 (T674) is a Phosphothreonine. The segment at 711–736 is KIF2C-binding; the sequence is TPLALPTRDLNATFDLSEEPPSKPSF. The tract at residues 767–798 is disordered; sequence MKGPKPTSSLPGTSACKKKRVASSSVSHGRSR. 2 short sequence motifs (MAPRE1-binding) span residues 774-777 and 800-803; these read SSLP and ARLP. S822 carries the phosphoserine modification.

Belongs to the TRAFAC class myosin-kinesin ATPase superfamily. Kinesin family. Interacts with MAPRE1; this interaction is required for efficient accumulation at microtubule plus ends. Interacts with KIF2C at microtubule tips; this interaction increases the affinity of both partners for microtubule plus ends and is required for robust microtubule depolymerization. KIF2C phosphorylation by AURKA or AURKB strongly reduces KIF18B-binding. As to expression, shows a prominent expression in the amygdala.

It localises to the nucleus. Its subcellular location is the cytoplasm. The protein resides in the cytoskeleton. In terms of biological role, in complex with KIF2C, constitutes the major microtubule plus-end depolymerizing activity in mitotic cells. Its major role may be to transport KIF2C and/or MAPRE1 along microtubules. This chain is Kinesin-like protein KIF18B (KIF18B), found in Homo sapiens (Human).